A 285-amino-acid chain; its full sequence is ATP synthase gamma chain (285 aa).

This sequence belongs to the ATPase gamma chain family. In terms of assembly, F-type ATPases have 2 components, CF(1) - the catalytic core - and CF(0) - the membrane proton channel. CF(1) has five subunits: alpha(3), beta(3), gamma(1), delta(1), epsilon(1). CF(0) has three main subunits: a, b and c.

It localises to the cell membrane. Produces ATP from ADP in the presence of a proton gradient across the membrane. The gamma chain is believed to be important in regulating ATPase activity and the flow of protons through the CF(0) complex. This is ATP synthase gamma chain from Geobacillus sp. (strain WCH70).